A 101-amino-acid chain; its full sequence is A-type ATP synthase subunit F (101 aa).

Belongs to the V-ATPase F subunit family. In terms of assembly, has multiple subunits with at least A(3), B(3), C, D, E, F, H, I and proteolipid K(x).

Its subcellular location is the cell membrane. In terms of biological role, component of the A-type ATP synthase that produces ATP from ADP in the presence of a proton gradient across the membrane. In Methanosarcina acetivorans (strain ATCC 35395 / DSM 2834 / JCM 12185 / C2A), this protein is A-type ATP synthase subunit F.